The following is a 156-amino-acid chain: Arginine repressor (156 aa).

It belongs to the ArgR family.

Its subcellular location is the cytoplasm. It participates in amino-acid biosynthesis; L-arginine biosynthesis [regulation]. Functionally, regulates arginine biosynthesis genes. The chain is Arginine repressor from Shewanella loihica (strain ATCC BAA-1088 / PV-4).